Here is a 91-residue protein sequence, read N- to C-terminus: Small ribosomal subunit protein bS16 (91 aa).

It belongs to the bacterial ribosomal protein bS16 family. As to quaternary structure, part of the 30S ribosomal subunit.

In terms of biological role, binds to the lower part of the body of the 30S subunit, where it stabilizes two of its domains. This chain is Small ribosomal subunit protein bS16, found in Thermus thermophilus.